A 350-amino-acid chain; its full sequence is 26S proteasome non-ATPase regulatory subunit 8 (350 aa).

Residues 1–24 (MFIKGRAPRAPPRERRRATRGGLR) are disordered. Residue serine 106 is modified to Phosphoserine. In terms of domain architecture, PCI spans 162-331 (PSFERYMAQL…QQKPEDTTIP (170 aa)). A Glycyl lysine isopeptide (Lys-Gly) (interchain with G-Cter in SUMO2) cross-link involves residue lysine 297.

It belongs to the proteasome subunit S14 family. Component of the 19S proteasome regulatory particle complex. The 26S proteasome consists of a 20S core particle (CP) and two 19S regulatory subunits (RP). The regulatory particle is made of a lid composed of 9 subunits including PSMD8, a base containing 6 ATPases and few additional components. Interacts with DDI2. Interacts with TASOR.

Functionally, component of the 26S proteasome, a multiprotein complex involved in the ATP-dependent degradation of ubiquitinated proteins. This complex plays a key role in the maintenance of protein homeostasis by removing misfolded or damaged proteins, which could impair cellular functions, and by removing proteins whose functions are no longer required. Therefore, the proteasome participates in numerous cellular processes, including cell cycle progression, apoptosis, or DNA damage repair. In Homo sapiens (Human), this protein is 26S proteasome non-ATPase regulatory subunit 8 (PSMD8).